The chain runs to 167 residues: NAD(P)H-quinone oxidoreductase subunit J (167 aa).

The protein belongs to the complex I 30 kDa subunit family. In terms of assembly, NDH-1 can be composed of about 15 different subunits; different subcomplexes with different compositions have been identified which probably have different functions.

The protein localises to the cellular thylakoid membrane. It carries out the reaction a plastoquinone + NADH + (n+1) H(+)(in) = a plastoquinol + NAD(+) + n H(+)(out). It catalyses the reaction a plastoquinone + NADPH + (n+1) H(+)(in) = a plastoquinol + NADP(+) + n H(+)(out). In terms of biological role, NDH-1 shuttles electrons from an unknown electron donor, via FMN and iron-sulfur (Fe-S) centers, to quinones in the respiratory and/or the photosynthetic chain. The immediate electron acceptor for the enzyme in this species is believed to be plastoquinone. Couples the redox reaction to proton translocation, and thus conserves the redox energy in a proton gradient. Cyanobacterial NDH-1 also plays a role in inorganic carbon-concentration. This chain is NAD(P)H-quinone oxidoreductase subunit J, found in Microcystis aeruginosa (strain NIES-843 / IAM M-2473).